A 588-amino-acid polypeptide reads, in one-letter code: 2-succinyl-5-enolpyruvyl-6-hydroxy-3-cyclohexene-1-carboxylate synthase (588 aa).

The segment at 1–22 (MTTTGSLPAQPSSTSPRTGNPS) is disordered.

This sequence belongs to the TPP enzyme family. MenD subfamily. In terms of assembly, homodimer. Mg(2+) serves as cofactor. Mn(2+) is required as a cofactor. The cofactor is thiamine diphosphate.

It catalyses the reaction isochorismate + 2-oxoglutarate + H(+) = 5-enolpyruvoyl-6-hydroxy-2-succinyl-cyclohex-3-ene-1-carboxylate + CO2. It participates in quinol/quinone metabolism; 1,4-dihydroxy-2-naphthoate biosynthesis; 1,4-dihydroxy-2-naphthoate from chorismate: step 2/7. It functions in the pathway quinol/quinone metabolism; menaquinone biosynthesis. In terms of biological role, catalyzes the thiamine diphosphate-dependent decarboxylation of 2-oxoglutarate and the subsequent addition of the resulting succinic semialdehyde-thiamine pyrophosphate anion to isochorismate to yield 2-succinyl-5-enolpyruvyl-6-hydroxy-3-cyclohexene-1-carboxylate (SEPHCHC). This is 2-succinyl-5-enolpyruvyl-6-hydroxy-3-cyclohexene-1-carboxylate synthase from Clavibacter michiganensis subsp. michiganensis (strain NCPPB 382).